The primary structure comprises 150 residues: D-aminoacyl-tRNA deacylase (150 aa).

Residues 138 to 139 carry the Gly-cisPro motif, important for rejection of L-amino acids motif; the sequence is GP.

This sequence belongs to the DTD family. As to quaternary structure, homodimer.

The protein localises to the cytoplasm. It catalyses the reaction glycyl-tRNA(Ala) + H2O = tRNA(Ala) + glycine + H(+). The enzyme catalyses a D-aminoacyl-tRNA + H2O = a tRNA + a D-alpha-amino acid + H(+). Functionally, an aminoacyl-tRNA editing enzyme that deacylates mischarged D-aminoacyl-tRNAs. Also deacylates mischarged glycyl-tRNA(Ala), protecting cells against glycine mischarging by AlaRS. Acts via tRNA-based rather than protein-based catalysis; rejects L-amino acids rather than detecting D-amino acids in the active site. By recycling D-aminoacyl-tRNA to D-amino acids and free tRNA molecules, this enzyme counteracts the toxicity associated with the formation of D-aminoacyl-tRNA entities in vivo and helps enforce protein L-homochirality. The sequence is that of D-aminoacyl-tRNA deacylase from Flavobacterium johnsoniae (strain ATCC 17061 / DSM 2064 / JCM 8514 / BCRC 14874 / CCUG 350202 / NBRC 14942 / NCIMB 11054 / UW101) (Cytophaga johnsonae).